We begin with the raw amino-acid sequence, 673 residues long: Annexin A6 (673 aa).

Position 2 is an N-acetylalanine (Ala2). Ser13 is modified (phosphoserine). 8 Annexin repeats span residues 20–91, 92–163, 175–247, 251–322, 363–434, 435–506, 521–595, and 599–670; these read FDAN…NLMR, PLAY…VLLQ, DLVQ…AVVK, STPE…KLCG, FNPD…GLMM, PPAH…SLAT, EDAQ…AIVQ, and NKPL…ALCG. Position 30 is a phosphotyrosine (Tyr30). An N6-acetyllysine mark is found at Lys63, Lys68, Lys75, and Lys81. Tyr201 is subject to Phosphotyrosine. An N6-acetyllysine mark is found at Lys306, Lys370, and Lys418. Ser422 carries the phosphoserine modification. Position 483 is an N6-acetyllysine (Lys483). Ser537 carries the post-translational modification Phosphoserine. Lys620 bears the N6-acetyllysine mark.

This sequence belongs to the annexin family.

Its subcellular location is the cytoplasm. The protein resides in the melanosome. Functionally, may associate with CD21. May regulate the release of Ca(2+) from intracellular stores. The sequence is that of Annexin A6 (Anxa6) from Mus musculus (Mouse).